A 75-amino-acid polypeptide reads, in one-letter code: UPF0352 protein YejL (75 aa).

It belongs to the UPF0352 family.

In Shigella dysenteriae serotype 1 (strain Sd197), this protein is UPF0352 protein YejL.